A 319-amino-acid polypeptide reads, in one-letter code: Free fatty acid receptor 3 (319 aa).

At 1-15 (MGTSFFLGNYWLFFS) the chain is on the extracellular side. The helical transmembrane segment at 16–36 (VYLLVFLVGLPLNVMALVVFV) threads the bilayer. The Cytoplasmic segment spans residues 37 to 43 (GKLRRRP). The chain crosses the membrane as a helical span at residues 44-64 (VAVDLLLLNLTISDLLLLLFL). The Extracellular portion of the chain corresponds to 65–98 (PFRMVEAACGMRWLLPFIFCPLSGFLFFTTIYLT). The cysteines at positions 84 and 165 are disulfide-linked. Residues 99–119 (SLFLTAVSIERFLSVAYPLWY) form a helical membrane-spanning segment. At 120 to 127 (KTRPRLAQ) the chain is on the cytoplasmic side. The helical transmembrane segment at 128 to 148 (AGLVSVVCWFLASAHCSVVYI) threads the bilayer. At 149–183 (TEYWGNATYSQGTNGTCYLEFREDQLAILLPVRLE) the chain is on the extracellular side. N-linked (GlcNAc...) asparagine glycans are attached at residues Asn154 and Asn162. The helical transmembrane segment at 184-206 (MAVVLFMVPLCITSYCYSRLVWI) threads the bilayer. The Cytoplasmic segment spans residues 207–218 (LSRGASRRRRKR). A helical transmembrane segment spans residues 219–239 (IMGLLAATLLIFFVCFGPYNM). Residues 240 to 254 (SHVVGYVSRESPSWR) lie on the Extracellular side of the membrane. The chain crosses the membrane as a helical span at residues 255–275 (SYVLLLSTLNSCIDPLVFYFS). The Cytoplasmic segment spans residues 276–319 (SSKFQADFHQLLGRLLRTCVPWTQQVSLELKVKNGEEPSKECPS).

It belongs to the G-protein coupled receptor 1 family. As to expression, expressed in white adipose tissue and skeletal muscle (at protein level). Abundantly expressed in sympathetic ganglia such as the superior cervical ganglion. Also expressed by intestinal endocrine cells.

It localises to the cell membrane. Functionally, g protein-coupled receptor that is activated by a major product of dietary fiber digestion, the short chain fatty acids (SCFAs), and that plays a role in the regulation of whole-body energy homeostasis and in intestinal immunity. In omnivorous mammals, the short chain fatty acids acetate, propionate and butyrate are produced primarily by the gut microbiome that metabolizes dietary fibers. SCFAs serve as a source of energy but also act as signaling molecules. That G protein-coupled receptor is probably coupled to the pertussis toxin-sensitive, G(i/o)-alpha family of G proteins. Its activation results in the formation of inositol 1,4,5-trisphosphate, the mobilization of intracellular calcium, the phosphorylation of the MAPK3/ERK1 and MAPK1/ERK2 kinases and the inhibition of intracellular cAMP accumulation. Activated by SCFAs and by beta-hydroxybutyrate, a ketone body produced by the liver upon starvation, it inhibits N-type calcium channels and modulates the activity of sympathetic neurons through a signaling cascade involving the beta and gamma subunits of its coupled G protein, phospholipase C and MAP kinases. Thereby, it may regulate energy expenditure through the control of the sympathetic nervous system that controls for instance heart rate. Upon activation by SCFAs accumulating in the intestine, it may also signal to the brain via neural circuits which in turn would regulate intestinal gluconeogenesis. May also control the production of hormones involved in whole-body energy homeostasis. May for instance, regulate blood pressure through renin secretion. May also regulate secretion of the PYY peptide by enteroendocrine cells and control gut motility, intestinal transit rate, and the harvesting of energy from SCFAs produced by gut microbiota. May also indirectly regulate the production of LEP/Leptin, a hormone acting on the CNS to inhibit food intake, in response to the presence of short-chain fatty acids in the intestine. Finally, may also play a role in glucose homeostasis. Besides its role in energy homeostasis, may play a role in intestinal immunity. May mediate the activation of the inflammatory and immune response by SCFAs in the gut, regulating the rapid production of chemokines and cytokines by intestinal epithelial cells. Exhibits an SCFA-independent constitutive G protein-coupled receptor activity. This chain is Free fatty acid receptor 3 (Ffar3), found in Mus musculus (Mouse).